We begin with the raw amino-acid sequence, 567 residues long: Proline--tRNA ligase (567 aa).

Belongs to the class-II aminoacyl-tRNA synthetase family. ProS type 1 subfamily. As to quaternary structure, homodimer.

It is found in the cytoplasm. It catalyses the reaction tRNA(Pro) + L-proline + ATP = L-prolyl-tRNA(Pro) + AMP + diphosphate. Catalyzes the attachment of proline to tRNA(Pro) in a two-step reaction: proline is first activated by ATP to form Pro-AMP and then transferred to the acceptor end of tRNA(Pro). As ProRS can inadvertently accommodate and process non-cognate amino acids such as alanine and cysteine, to avoid such errors it has two additional distinct editing activities against alanine. One activity is designated as 'pretransfer' editing and involves the tRNA(Pro)-independent hydrolysis of activated Ala-AMP. The other activity is designated 'posttransfer' editing and involves deacylation of mischarged Ala-tRNA(Pro). The misacylated Cys-tRNA(Pro) is not edited by ProRS. This is Proline--tRNA ligase from Streptomyces griseus subsp. griseus (strain JCM 4626 / CBS 651.72 / NBRC 13350 / KCC S-0626 / ISP 5235).